The chain runs to 91 residues: Protein LURE 1.3 (91 aa).

The N-terminal stretch at 1–20 (MKLPFIFLITLLIFVSSCTS) is a signal peptide. An N-linked (GlcNAc...) asparagine glycan is attached at Asn24. 3 disulfides stabilise this stretch: Cys59/Cys76, Cys62/Cys83, and Cys66/Cys85. Residues 68 to 88 (RRGKYIRTCSFERKLCRCSIS) are PRK6 binding.

It belongs to the DEFL family. Binds to PRK6 LRRs. As to expression, expressed in the pistil. Detected exclusively in the synergid cells.

The protein localises to the secreted. Functionally, pollen tube attractants guiding pollen tubes to the ovular micropyle. Attracts pollen tubes from both A.thaliana and A.lyrata. The sequence is that of Protein LURE 1.3 from Arabidopsis thaliana (Mouse-ear cress).